The following is a 318-amino-acid chain: NADH-ubiquinone oxidoreductase chain 1 (318 aa).

The next 8 helical transmembrane spans lie at phenylalanine 2–leucine 22, methionine 70–proline 90, leucine 100–glycine 120, alanine 147–isoleucine 167, threonine 172–glutamate 192, leucine 222–phenylalanine 242, glutamate 253–isoleucine 273, and leucine 294–isoleucine 314.

The protein belongs to the complex I subunit 1 family. As to quaternary structure, core subunit of respiratory chain NADH dehydrogenase (Complex I) which is composed of 45 different subunits.

The protein resides in the mitochondrion inner membrane. It carries out the reaction a ubiquinone + NADH + 5 H(+)(in) = a ubiquinol + NAD(+) + 4 H(+)(out). Its function is as follows. Core subunit of the mitochondrial membrane respiratory chain NADH dehydrogenase (Complex I) which catalyzes electron transfer from NADH through the respiratory chain, using ubiquinone as an electron acceptor. Essential for the catalytic activity and assembly of complex I. The protein is NADH-ubiquinone oxidoreductase chain 1 (MT-ND1) of Bos mutus grunniens (Wild yak).